A 248-amino-acid polypeptide reads, in one-letter code: DNA polymerase sliding clamp (248 aa).

It belongs to the PCNA family. Homotrimer. The subunits circularize to form a toroid; DNA passes through its center. Replication factor C (RFC) is required to load the toroid on the DNA.

Sliding clamp subunit that acts as a moving platform for DNA processing. Responsible for tethering the catalytic subunit of DNA polymerase and other proteins to DNA during high-speed replication. The protein is DNA polymerase sliding clamp of Nitrosopumilus maritimus (strain SCM1).